Consider the following 182-residue polypeptide: MSDNLALHGTTILCLKKNEEIIIAADGQVSHGNTILKSTARKLRTIANNKIIAGFAGSTADGLALFEKLEVKIEQHKHNLLRSAVELAKDWRSDKYLRRLEAMMIVADRNHILILTGNGDVVEPENNVAAIGSGGLFALSAARALMSYENNLTAEEIALKSMNIAADLCVFSNHNIIMEKVV.

Residue Thr10 is part of the active site. Na(+) is bound by residues Ala166, Cys169, and Ser172.

The protein belongs to the peptidase T1B family. HslV subfamily. In terms of assembly, a double ring-shaped homohexamer of HslV is capped on each side by a ring-shaped HslU homohexamer. The assembly of the HslU/HslV complex is dependent on binding of ATP.

Its subcellular location is the cytoplasm. It carries out the reaction ATP-dependent cleavage of peptide bonds with broad specificity.. With respect to regulation, allosterically activated by HslU binding. In terms of biological role, protease subunit of a proteasome-like degradation complex believed to be a general protein degrading machinery. This chain is ATP-dependent protease subunit HslV, found in Rickettsia felis (strain ATCC VR-1525 / URRWXCal2) (Rickettsia azadi).